The chain runs to 445 residues: C4-dicarboxylate transport protein 2 (445 aa).

8 consecutive transmembrane segments (helical) span residues 24-44 (ILYVQVLIAILIGIVVGWLFP), 62-82 (LIKMVIAPIIFCTVVSGIAHI), 96-116 (LVYFEIVSTFALLLGLIVGNL), 163-183 (GDILQVLLFAILFGFALMALG), 201-221 (FGVIAIVMKAAPVGAFGAMAF), 237-257 (LIALFYITAGLFVVIVLGLIA), 334-354 (ALGVDLSFSQQVTILIVAMLT), and 366-386 (FITLAATLSVVNPALVPGMAI).

The protein belongs to the dicarboxylate/amino acid:cation symporter (DAACS) (TC 2.A.23) family.

The protein localises to the cell inner membrane. In terms of biological role, responsible for the transport of dicarboxylates such as succinate, fumarate, and malate from the periplasm across the membrane. The protein is C4-dicarboxylate transport protein 2 of Bradyrhizobium sp. (strain ORS 278).